Consider the following 151-residue polypeptide: Brain ribonuclease (151 aa).

A disordered region spans residues 1–25; that stretch reads KESAAAKFRRQHMDAGSSSSGNSNY. K7 and R10 together coordinate substrate. H12 acts as the Proton acceptor in catalysis. 4 disulfides stabilise this stretch: C26–C84, C40–C95, C58–C110, and C65–C72. 41–45 is a binding site for substrate; sequence KPVNT. N-linked (GlcNAc...) asparagine glycosylation is present at N62. Substrate-binding residues include K66 and R85. H119 functions as the Proton donor in the catalytic mechanism. T129 carries an O-linked (GalNAc...) threonine glycan. An O-linked (GalNAc...) serine glycan is attached at S133.

The protein belongs to the pancreatic ribonuclease family.

The protein localises to the secreted. In Axis porcinus (Hog deer), this protein is Brain ribonuclease (BRN).